The sequence spans 362 residues: MEIIKLDHITKQYDDGFVALKDINLELESGKFYSLLGPSGSGKTTILRIIAGFTEASAGKVYFDGQDITNLDASKRHINTVFQNYALFPHLNVYENVAFALKLRQRPESEIREKVKDALHTVRLDGYANREISELSGGQQQRVAIARAIINEPKVLLLDECLSALDKRLRKEMQFELRAIQKKLGITFIFVTHDQEEALAMSDEIFVLNDGEIKQSGSPVDIYDEPVNDFVARFIGDSNILSGRMIRDFAVEFAGKDFECADAGITPGEKVEVVLRPEDLDITAPAAGKLLVTVQSQLFLGDHFEIKAIGQDGFEWLIHSTNGVQIGQEVGIFFDPEDIHVMRLGETEEEFDARLETYEGED.

Residues I4–I235 enclose the ABC transporter domain. Residue G37–T44 coordinates ATP.

The protein belongs to the ABC transporter superfamily. Spermidine/putrescine importer (TC 3.A.1.11.1) family. The complex is composed of two ATP-binding proteins (PotA), two transmembrane proteins (PotB and PotC) and a solute-binding protein (PotD).

The protein localises to the cell membrane. The catalysed reaction is ATP + H2O + polyamine-[polyamine-binding protein]Side 1 = ADP + phosphate + polyamineSide 2 + [polyamine-binding protein]Side 1.. Its function is as follows. Part of the ABC transporter complex PotABCD involved in spermidine/putrescine import. Responsible for energy coupling to the transport system. The protein is Spermidine/putrescine import ATP-binding protein PotA of Lactobacillus delbrueckii subsp. bulgaricus (strain ATCC 11842 / DSM 20081 / BCRC 10696 / JCM 1002 / NBRC 13953 / NCIMB 11778 / NCTC 12712 / WDCM 00102 / Lb 14).